A 476-amino-acid chain; its full sequence is MSDTPKPPSNTLSLKRETATEAPKLEERLHKVLAQAGLGSRRALEQRISNGLIKVNGDIAQLGMSVKSGDKIELDGRSFVASALTEPARVLIYNKPEGEVTTREDPEGRPTVFETLPVLKGARWIAIGRLDINTTGLLLLTTDGELANAMMHPSSEIEREYVVRVRSPEGEEHVQDELLEQLTRGVMLEDGTAKFDTIERIGNTDSHDWFRVVVKEGRNREVRRLWESQGCQVSRLKRTRYGSVLLPRELLRGQSTELPKTQVEALRTQLKLEKDMPLALTLQPIIGQRRSAKATLHVNRNDNNKHAYHNNHSTADESRELRRFDTLRDDRGRGQGKHHFKDRLTVSGEAAAKQAHKPFKQYKPKNDRSLSEGSPATFQSWYVPEGVSTGPRNHRNAGAGNGAHPNKKSPNPNTRNTPGQQTRKSPYKYPNNAPNFPSDHATPTFNPYGNPGQKTGAGRPNNSGGKYNRNRGPRYP.

In terms of domain architecture, S4 RNA-binding spans 27-96 (ERLHKVLAQA…PARVLIYNKP (70 aa)). Aspartate 131 (nucleophile) is an active-site residue. The segment at 299–476 (NRNDNNKHAY…YNRNRGPRYP (178 aa)) is disordered. Over residues 314-333 (TADESRELRRFDTLRDDRGR) the composition is skewed to basic and acidic residues. The span at 354–363 (QAHKPFKQYK) shows a compositional bias: basic residues. 2 stretches are compositionally biased toward polar residues: residues 371–380 (SEGSPATFQS) and 408–424 (KSPN…QTRK).

Belongs to the pseudouridine synthase RsuA family.

The enzyme catalyses uridine(2605) in 23S rRNA = pseudouridine(2605) in 23S rRNA. Its function is as follows. Responsible for synthesis of pseudouridine from uracil-2605 in 23S ribosomal RNA. The polypeptide is Ribosomal large subunit pseudouridine synthase B (rluB) (Xylella fastidiosa (strain 9a5c)).